Consider the following 715-residue polypeptide: Polyribonucleotide nucleotidyltransferase (715 aa).

Positions 493 and 499 each coordinate Mg(2+). The region spanning 560–619 (PRMITVKINPEKIRDVIGKGGSVIRALTEETGTTIDISDDGVVTIASTSSEGMAEAKKRI) is the KH domain. An S1 motif domain is found at 629–697 (GQVYEGTVLK…EKGRVRLSAK (69 aa)).

This sequence belongs to the polyribonucleotide nucleotidyltransferase family. Requires Mg(2+) as cofactor.

The protein localises to the cytoplasm. The enzyme catalyses RNA(n+1) + phosphate = RNA(n) + a ribonucleoside 5'-diphosphate. Its function is as follows. Involved in mRNA degradation. Catalyzes the phosphorolysis of single-stranded polyribonucleotides processively in the 3'- to 5'-direction. This chain is Polyribonucleotide nucleotidyltransferase, found in Burkholderia cenocepacia (strain HI2424).